A 764-amino-acid polypeptide reads, in one-letter code: 5-methyltetrahydropteroyltriglutamate--homocysteine methyltransferase (764 aa).

5-methyltetrahydropteroyltri-L-glutamate-binding positions include 16–19 (RELK) and Lys115. L-homocysteine-binding positions include 435–437 (IGS) and Glu488. Residues 435–437 (IGS) and Glu488 contribute to the L-methionine site. Residues 519–520 (RC) and Trp565 contribute to the 5-methyltetrahydropteroyltri-L-glutamate site. Asp603 lines the L-homocysteine pocket. Asp603 is an L-methionine binding site. Glu609 contacts 5-methyltetrahydropteroyltri-L-glutamate. His645, Cys647, and Glu669 together coordinate Zn(2+). His698 (proton donor) is an active-site residue. Cys730 serves as a coordination point for Zn(2+).

The protein belongs to the vitamin-B12 independent methionine synthase family. It depends on Zn(2+) as a cofactor.

It carries out the reaction 5-methyltetrahydropteroyltri-L-glutamate + L-homocysteine = tetrahydropteroyltri-L-glutamate + L-methionine. It functions in the pathway amino-acid biosynthesis; L-methionine biosynthesis via de novo pathway; L-methionine from L-homocysteine (MetE route): step 1/1. Its function is as follows. Catalyzes the transfer of a methyl group from 5-methyltetrahydrofolate to homocysteine resulting in methionine formation. This chain is 5-methyltetrahydropteroyltriglutamate--homocysteine methyltransferase, found in Burkholderia mallei (strain NCTC 10247).